The following is an 89-amino-acid chain: Strongylocin 2 (89 aa).

A signal peptide spans 1-22 (MNIRTASFTFIVVMMILSQTMA). Residues 23-38 (DRFFNEPEEDDHLVES) constitute a propeptide that is removed on maturation. Residue Trp-39 is modified to 6'-bromotryptophan.

In terms of processing, contains 3 disulfide bonds.

In terms of biological role, has antimicrobial activity against Gram-negative bacteria and Gram-positive bacteria with minimum inhibitory concentration (MIC) between 0.78 uM and 3.13 uM. This Echinus esculentus (Sea urchin) protein is Strongylocin 2.